The following is a 360-amino-acid chain: Phospho-N-acetylmuramoyl-pentapeptide-transferase (360 aa).

A run of 10 helical transmembrane segments spans residues 25–45 (RGILSVLTALSLSLWLGPWMI), 73–93 (TMGGALILTAIAISTLLWADL), 97–117 (YVWVVLVVTLLFGAIGWVDDY), 142–162 (IGAAVFLYMTAETPIETTLIV), 167–187 (SVEIQLGIFFVVLTYFVIVGS), 199–219 (GLAIMPTVMVAGALGIFCYLS), 236–256 (AGELIVFCAALVGAGLGFLWF), 263–283 (VFMGDVGALALGAALGTIAVI), 288–308 (IVLFIMGGVFVMETLSVMIQV), and 338–358 (VIVRFWIITVILVLIGLATLK).

This sequence belongs to the glycosyltransferase 4 family. MraY subfamily. It depends on Mg(2+) as a cofactor.

It is found in the cell inner membrane. It catalyses the reaction UDP-N-acetyl-alpha-D-muramoyl-L-alanyl-gamma-D-glutamyl-meso-2,6-diaminopimeloyl-D-alanyl-D-alanine + di-trans,octa-cis-undecaprenyl phosphate = di-trans,octa-cis-undecaprenyl diphospho-N-acetyl-alpha-D-muramoyl-L-alanyl-D-glutamyl-meso-2,6-diaminopimeloyl-D-alanyl-D-alanine + UMP. Its pathway is cell wall biogenesis; peptidoglycan biosynthesis. Functionally, catalyzes the initial step of the lipid cycle reactions in the biosynthesis of the cell wall peptidoglycan: transfers peptidoglycan precursor phospho-MurNAc-pentapeptide from UDP-MurNAc-pentapeptide onto the lipid carrier undecaprenyl phosphate, yielding undecaprenyl-pyrophosphoryl-MurNAc-pentapeptide, known as lipid I. The chain is Phospho-N-acetylmuramoyl-pentapeptide-transferase from Pseudomonas aeruginosa (strain LESB58).